Here is a 163-residue protein sequence, read N- to C-terminus: ATLPPTMEDLDIRQVAGTWHSMAMAASDISLLDSETAPLRVYVQELRPTPRDNLEIILRKRENHACIEGNIMAQRTEDPAVFMVDYQGEKKISVLDTDYTHYMFFCMEAPAPGTENGMMCQYLARTLKADNEVMEKFDRALQTLPVHIRIILDLTQGKEQCRV.

Cystine bridges form between Cys66–Cys161 and Cys106–Cys120.

It belongs to the calycin superfamily. Lipocalin family. Monomer.

The protein resides in the secreted. In terms of biological role, lactoglobulin is the primary component of whey, it binds retinol and is probably involved in the transport of that molecule. This Felis catus (Cat) protein is Beta-lactoglobulin-2 (LGB2).